The primary structure comprises 469 residues: 3-isopropylmalate dehydratase large subunit (469 aa).

3 residues coordinate [4Fe-4S] cluster: Cys-350, Cys-410, and Cys-413.

It belongs to the aconitase/IPM isomerase family. LeuC type 1 subfamily. Heterodimer of LeuC and LeuD. The cofactor is [4Fe-4S] cluster.

The catalysed reaction is (2R,3S)-3-isopropylmalate = (2S)-2-isopropylmalate. It participates in amino-acid biosynthesis; L-leucine biosynthesis; L-leucine from 3-methyl-2-oxobutanoate: step 2/4. In terms of biological role, catalyzes the isomerization between 2-isopropylmalate and 3-isopropylmalate, via the formation of 2-isopropylmaleate. This is 3-isopropylmalate dehydratase large subunit from Brucella abortus (strain S19).